We begin with the raw amino-acid sequence, 238 residues long: Cysteine-rich venom protein pseudechetoxin-like (238 aa).

The N-terminal stretch at 1–19 (MIAFIVLLSLAAVLQQSSG) is a signal peptide. The propeptide occupies 20-28 (TVDFASESS). One can recognise an SCP domain in the interval 38 to 164 (VDKHNALRRS…STKYLYVCQY (127 aa)). Intrachain disulfides connect cysteine 75–cysteine 153, cysteine 92–cysteine 165, cysteine 148–cysteine 162, cysteine 184–cysteine 191, cysteine 187–cysteine 196, cysteine 200–cysteine 233, cysteine 209–cysteine 227, and cysteine 218–cysteine 231. In terms of domain architecture, ShKT spans 200–233 (CKHEDDFSNCKALAKNSKCQTAWIKSKCPATCFC).

This sequence belongs to the CRISP family. As to expression, expressed by the venom gland.

The protein resides in the secreted. Its function is as follows. Blocks olfactory (CNGA2) and retinal (CNGA1) CNG channel currents. Does not affect neither depolarization- nor caffeine-induced contraction of smooth muscle. The chain is Cysteine-rich venom protein pseudechetoxin-like from Hoplocephalus stephensii (Stephens's banded snake).